The chain runs to 190 residues: MKEKKGHYVPPSYIPLTQSDADTEVETTTPNLEIAVSESTKDDPRQWSSGICACFDDMQSCCVGLFCPCYIFGKNAELLGSGTFAGPCLTHCISWALVNTICCFATNGALLGLPGCFVSCYACGYRKSLRAKYNLQEAPCGDFVTHFFCHLCAICQEYREIREQSSGSYPLDMKMAITNAPLAQTMESAN.

2 helical membrane passes run Leu78–Val98 and Gly108–Tyr125.

This sequence belongs to the cornifelin family.

The protein localises to the membrane. Functionally, may be involved in cadmium resistance. This Arabidopsis thaliana (Mouse-ear cress) protein is Protein PLANT CADMIUM RESISTANCE 10 (PCR10).